The primary structure comprises 207 residues: Large ribosomal subunit protein uL4 (207 aa).

Residues 45–89 (RQGTHKVKTRSEVRGGGRKPWRQKGTGRARQGSIRSPQWRGGGTV) form a disordered region. Residues 60-71 (GGRKPWRQKGTG) show a composition bias toward basic residues.

The protein belongs to the universal ribosomal protein uL4 family. In terms of assembly, part of the 50S ribosomal subunit.

Functionally, one of the primary rRNA binding proteins, this protein initially binds near the 5'-end of the 23S rRNA. It is important during the early stages of 50S assembly. It makes multiple contacts with different domains of the 23S rRNA in the assembled 50S subunit and ribosome. Forms part of the polypeptide exit tunnel. The protein is Large ribosomal subunit protein uL4 of Bacillus mycoides (strain KBAB4) (Bacillus weihenstephanensis).